The chain runs to 71 residues: Brevinin-1HN1 (71 aa).

Positions 1 to 22 (MFTSKKPLLLLFFLGTINLSLC) are cleaved as a signal peptide. A propeptide spanning residues 23–45 (EQERDADEEERRDDPDERDVEVE) is cleaved from the precursor. Cysteine 65 and cysteine 71 form a disulfide bridge.

In terms of tissue distribution, expressed by the skin glands.

The protein localises to the secreted. Its function is as follows. Has antimicrobial activity against Gram-positive bacteria and fungi but has weak or no activity against a range of Gram-negative bacteria except P.faecalis. Active against the Gram-positive bacteria E.faecium 091299 (MIC=19 uM), E.faecalis 981 (MIC=19 uM), S.aureus ATCC 25923 (MIC=1.2 uM), S.carnosus KHS (MIC=4.8 uM), B.licheniformis X39 (MIC=2.4 uM) and R.rhodochrous X15 (MIC=1.2 uM). Active against the Gram-negative bacterium P.faecalis X29 (MIC=4.8 uM), is virtually inactive against E.coli ATCC 25922 (MIC=150 uM) and inactive against P.aeruginosa and S.typhi. Has antifungal activity against C.albicans ATCC 2002 (MIC=2.4 uM) and is also active against the slime mold 090223 (MIC=1.2 uM). Has low hemolytic activity against human erythrocytes (LC(50)=75 uM). The protein is Brevinin-1HN1 of Odorrana hainanensis (Odor frog).